Here is a 334-residue protein sequence, read N- to C-terminus: ADP-L-glycero-D-manno-heptose-6-epimerase (334 aa).

Residues 11-12 (FI), 32-33 (DN), lysine 39, lysine 54, 77-81 (QGACS), and asparagine 94 contribute to the NADP(+) site. Tyrosine 141 serves as the catalytic Proton acceptor. Residue lysine 145 coordinates NADP(+). Asparagine 171 is a binding site for substrate. 2 residues coordinate NADP(+): valine 172 and lysine 180. Lysine 180 (proton acceptor) is an active-site residue. Substrate contacts are provided by residues arginine 182, histidine 189, 203–206 (FGSN), arginine 216, and tyrosine 295.

The protein belongs to the NAD(P)-dependent epimerase/dehydratase family. HldD subfamily. As to quaternary structure, homopentamer. It depends on NADP(+) as a cofactor.

The catalysed reaction is ADP-D-glycero-beta-D-manno-heptose = ADP-L-glycero-beta-D-manno-heptose. It participates in nucleotide-sugar biosynthesis; ADP-L-glycero-beta-D-manno-heptose biosynthesis; ADP-L-glycero-beta-D-manno-heptose from D-glycero-beta-D-manno-heptose 7-phosphate: step 4/4. The protein operates within bacterial outer membrane biogenesis; LOS core biosynthesis. Its function is as follows. Catalyzes the interconversion between ADP-D-glycero-beta-D-manno-heptose and ADP-L-glycero-beta-D-manno-heptose via an epimerization at carbon 6 of the heptose. The protein is ADP-L-glycero-D-manno-heptose-6-epimerase of Neisseria gonorrhoeae.